The chain runs to 72 residues: EAGEECDCGSPANPCCDAATCKLRPGAQCAEGLCCDQCRFIKKGKICRRARGDNPDDRCTGQSADCPRNRFH.

The Disintegrin domain occupies 1-72 (EAGEECDCGS…SADCPRNRFH (72 aa)). 6 disulfide bridges follow: C6–C21, C8–C16, C15–C38, C29–C35, C34–C59, and C47–C66. A Cell attachment site motif is present at residues 51–53 (RGD). The interval 51–72 (RGDNPDDRCTGQSADCPRNRFH) is disordered.

It belongs to the venom metalloproteinase (M12B) family. P-II subfamily. P-IIa sub-subfamily. Monomer (disintegrin). In terms of tissue distribution, expressed by the venom gland.

It localises to the secreted. Inhibits fibrinogen interaction with platelet. Acts by binding to alpha-IIb/beta-3 (ITGA2B/ITGB3) on the platelet surface and inhibits aggregation induced by ADP, thrombin, platelet-activating factor and collagen. This chain is Disintegrin cereberin, found in Crotalus cerberus (Arizona black rattlesnake).